Here is a 121-residue protein sequence, read N- to C-terminus: Small ribosomal subunit protein bS16 (121 aa).

The interval 88-121 (GKAKLEKEKKAKAKTKEEENEGSKTESGSNEAES) is disordered. The span at 90 to 111 (AKLEKEKKAKAKTKEEENEGSK) shows a compositional bias: basic and acidic residues. Residues 112 to 121 (TESGSNEAES) are compositionally biased toward polar residues.

The protein belongs to the bacterial ribosomal protein bS16 family.

The chain is Small ribosomal subunit protein bS16 from Prochlorococcus marinus (strain MIT 9215).